A 471-amino-acid chain; its full sequence is Tripartite motif-containing protein 60 (471 aa).

Residues 16 to 57 form an RING-type zinc finger; it reads CPICLEYLKDPVTINCGHNFCRSCLSVSWKDLDDTFPCPVCR. The B box-type zinc-finger motif lies at 92–133; it reads KENAMCEKHNQFLTLFCVKDLEILCTQCSFSTKHQKHYICPI. Zn(2+) contacts are provided by Cys97, His100, Cys119, and His125. A coiled-coil region spans residues 171–223; that stretch reads ELKKKVEYKREEINSEFEQIRLFLQNEQEMILRQIQDEEMNILAKLNENLVEL. Positions 277-470 constitute a B30.2/SPRY domain; it reads FSLPPQYSGL…LKICSVSDSE (194 aa).

The protein belongs to the TRIM/RBCC family.

Its function is as follows. E3 SUMO-protein ligase that mediates SUMOylation of TAB2 leading to inhibition of NF-kappa-B and MAPK pathways by suppressing the TRAF6/TAB2/TAK1 complex. The protein is Tripartite motif-containing protein 60 (TRIM60) of Homo sapiens (Human).